Reading from the N-terminus, the 166-residue chain is Large ribosomal subunit protein uL10 (166 aa).

The protein belongs to the universal ribosomal protein uL10 family. In terms of assembly, part of the ribosomal stalk of the 50S ribosomal subunit. The N-terminus interacts with L11 and the large rRNA to form the base of the stalk. The C-terminus forms an elongated spine to which L12 dimers bind in a sequential fashion forming a multimeric L10(L12)X complex.

Functionally, forms part of the ribosomal stalk, playing a central role in the interaction of the ribosome with GTP-bound translation factors. In Neisseria meningitidis serogroup A / serotype 4A (strain DSM 15465 / Z2491), this protein is Large ribosomal subunit protein uL10 (rplJ).